The primary structure comprises 267 residues: Tryptophan synthase alpha chain (267 aa).

Active-site proton acceptor residues include Glu49 and Asp60.

It belongs to the TrpA family. As to quaternary structure, tetramer of two alpha and two beta chains.

It catalyses the reaction (1S,2R)-1-C-(indol-3-yl)glycerol 3-phosphate + L-serine = D-glyceraldehyde 3-phosphate + L-tryptophan + H2O. Its pathway is amino-acid biosynthesis; L-tryptophan biosynthesis; L-tryptophan from chorismate: step 5/5. Functionally, the alpha subunit is responsible for the aldol cleavage of indoleglycerol phosphate to indole and glyceraldehyde 3-phosphate. In Rippkaea orientalis (strain PCC 8801 / RF-1) (Cyanothece sp. (strain PCC 8801)), this protein is Tryptophan synthase alpha chain.